Here is an 80-residue protein sequence, read N- to C-terminus: Toxin Acra1 (80 aa).

The first 22 residues, 1–22 (MMKLVLFSIIVILFSLIGSIHG), serve as a signal peptide directing secretion. An LCN-type CS-alpha/beta domain is found at 25 to 80 (VPGNYPLDSSGNKYPCTVLGDNQSCIDVCKKHGVKYGYCYSFKCWCEFLEDKNVSI). 3 disulfide bridges follow: Cys40-Cys63, Cys49-Cys68, and Cys53-Cys70.

In terms of tissue distribution, expressed by the venom gland.

The protein resides in the secreted. In terms of biological role, probable neurotoxin that inhibits ion channels. Is toxic to mice. Is about 2.8% of the total protein in the venom. The protein is Toxin Acra1 of Androctonus crassicauda (Arabian fat-tailed scorpion).